A 998-amino-acid polypeptide reads, in one-letter code: MIGVDMKLETLVNNGPAVIFLCRAETGWPVETVTANIVRFGYSPKDFISGGLGYADIIYPADLEIAVSQFFSYVEKDYIGKDLDYKVEYREYKGEAGEHKRNGKGNIGKDRGGYDSFTQQYRLLNKSGDVLWVEAEIKVLEEEEGKAGLFQVTVFDISRWKHTEKAMPAALDTENELKRIINSGHVIVFLWRAEPGWPVDFVSENISELGYTPEDFTSGRIVYTDIIHPDDLDNVRAEVSKNTEEGRDYFSKEYRVLAKSGEVRYVDERTLIRRNEKGEITCYQGILLDITQRKEAEELILSQNRVLERIASGASLDEVLLLLVNYAEEMKPGLLCTVMLLDREQKRLFYGACPSLPKLYSKAINGIQVQVNSETAGTAAGTGKRVIVGNIMKDPFCEECREIAQKVGLKACWAEPIFSSGGEVLGVFTIYLRETRKPREEELEFIRTNAYLAGIAIEHVQAADALKESENRFRTIFDNINDQLYIREPDGISYMDVNQVVVDRLGYSKEEILNMKAEEIIPSEYWASVRENMQKIKAEGSRIFEAGAVCKGGTVIPLEVSARIIDYGGKKTIFSVSRDITERKKAEVAQRLNGSRLEALVKLDQMAGASLKEITDFAREEAVRLTGSKLGYLAFMDAYESTLVMHSWSDSAMEECSIEDKQFVYPVKSMGLWGEAVRQRKPIITNDYPAPNPLKKGYPKNHVHLIRHLNIPVFDGKRIVAVAGVGNKEENYDESDVRQLTLLMQGMWQLIQRKQLEEALRTYSGELSRANEELRSVNMMKTEFVEEMMFPEKAEYGEIMDYETLYAIDSQQQKAVNTFIHYSEKLRRLVDSLLYQSLEKAGKIDYSFEETQLKDVLSDAFLNNVFLIGEKALEVKKEVSASLSEIKGDREKLTALFTALIDHAIKFTPQGGKLALEVKEEAGNVHIVIADSGKGISKELIPYLFDRLYQVNDSITRRYQGLESGLYICKNIVDAHKGEIWFESEEGLGNLMHVKLPK.

The region spanning 40–77 is the PAS 1 domain; it reads FGYSPKDFISGGLGYADIIYPADLEIAVSQFFSYVEKD. Positions 117–169 constitute a PAC 1 domain; it reads FTQQYRLLNKSGDVLWVEAEIKVLEEEEGKAGLFQVTVFDISRWKHTEKAMPA. The 38-residue stretch at 209-246 folds into the PAS 2 domain; the sequence is LGYTPEDFTSGRIVYTDIIHPDDLDNVRAEVSKNTEEG. The PAC 2 domain occupies 250–302; sequence FSKEYRVLAKSGEVRYVDERTLIRRNEKGEITCYQGILLDITQRKEAEELILS. One can recognise a GAF 1 domain in the interval 314 to 458; it reads ASLDEVLLLL…NAYLAGIAIE (145 aa). Residues 469–540 form the PAS 3 domain; sequence SENRFRTIFD…ENMQKIKAEG (72 aa). The 144-residue stretch at 609 to 752 folds into the GAF 2 domain; it reads ASLKEITDFA…LMQGMWQLIQ (144 aa). Cys656 contacts heme. The region spanning 783-998 is the Histidine kinase domain; the sequence is EFVEEMMFPE…GNLMHVKLPK (216 aa).

The cofactor is heme. Post-translationally, autophosphorylates: autophosphorylation is dependent on the redox state of heme cofactor and is promoted upon reduction.

Its subcellular location is the cytoplasm. It carries out the reaction ATP + protein L-histidine = ADP + protein N-phospho-L-histidine.. In terms of biological role, heme-binding sensor kinase component part of a two-component regulatory system involved in methyl sulfide metabolism. Does not act as a phytochrome-like photoreceptor. This chain is Methyl sulfide methyltransferase-associated sensor (msmS), found in Methanosarcina acetivorans (strain ATCC 35395 / DSM 2834 / JCM 12185 / C2A).